The chain runs to 259 residues: Global transcriptional regulator CodY (259 aa).

A GAF domain region spans residues methionine 1–leucine 155. The H-T-H motif DNA-binding region spans alanine 203–arginine 222. The residue at position 215 (serine 215) is a Phosphoserine.

Belongs to the CodY family.

It localises to the cytoplasm. In terms of biological role, DNA-binding global transcriptional regulator which is involved in the adaptive response to starvation and acts by directly or indirectly controlling the expression of numerous genes in response to nutrient availability. During rapid exponential growth, CodY is highly active and represses genes whose products allow adaptation to nutrient depletion. In Oceanobacillus iheyensis (strain DSM 14371 / CIP 107618 / JCM 11309 / KCTC 3954 / HTE831), this protein is Global transcriptional regulator CodY.